Consider the following 110-residue polypeptide: Large ribosomal subunit protein P2B (110 aa).

Residues 73 to 88 (TPAAGGAAGAEATSAA) show a composition bias toward low complexity. Residues 73-110 (TPAAGGAAGAEATSAAEEAKEEEAAEESDEDMGFGLFD) are disordered. The span at 91–104 (AKEEEAAEESDEDM) shows a compositional bias: acidic residues. S100 is modified (phosphoserine).

The protein belongs to the eukaryotic ribosomal protein P1/P2 family. Component of the large ribosomal subunit (LSU). Mature yeast ribosomes consist of a small (40S) and a large (60S) subunit. The 40S small subunit contains 1 molecule of ribosomal RNA (18S rRNA) and at least 33 different proteins. The large 60S subunit contains 3 rRNA molecules (25S, 5.8S and 5S rRNA) and at least 46 different proteins. The acidic ribosomal P-proteins form the stalk structure of the 60S subunit. They are organized as a pentameric complex in which uL10/P0 interacts with 2 heterodimers of P1 and P2 proteins.

Its subcellular location is the cytoplasm. Functionally, component of the ribosome, a large ribonucleoprotein complex responsible for the synthesis of proteins in the cell. The small ribosomal subunit (SSU) binds messenger RNAs (mRNAs) and translates the encoded message by selecting cognate aminoacyl-transfer RNA (tRNA) molecules. The large subunit (LSU) contains the ribosomal catalytic site termed the peptidyl transferase center (PTC), which catalyzes the formation of peptide bonds, thereby polymerizing the amino acids delivered by tRNAs into a polypeptide chain. The nascent polypeptides leave the ribosome through a tunnel in the LSU and interact with protein factors that function in enzymatic processing, targeting, and the membrane insertion of nascent chains at the exit of the ribosomal tunnel. In Schizosaccharomyces pombe (strain 972 / ATCC 24843) (Fission yeast), this protein is Large ribosomal subunit protein P2B (rpp202).